The chain runs to 478 residues: Zinc finger protein 410 (478 aa).

Disordered regions lie at residues 84–113 (PDGE…LQDL) and 187–214 (NAKT…PLPQ). Residues 103–113 (TPESPSLLQDL) are compositionally biased toward polar residues. 5 C2H2-type zinc fingers span residues 219–243 (LKCT…LKTH), 249–273 (FICP…MRTH), 279–303 (FMCH…RRIH), 309–333 (FLCE…LVVH), and 339–362 (HQCQ…RKHH). The Zn(2+) site is built by Cys-221, Cys-226, His-239, His-243, Cys-251, Cys-256, His-269, His-273, Cys-281, Cys-286, His-299, His-303, Cys-311, Cys-316, His-329, His-333, Cys-341, Cys-344, His-357, and His-361.

In terms of assembly, interacts with CDKN2A/p14ARF. O-glycosylated. O-GlcNAcylation may occur in response to increasing glucose levels and affect transcription factor activity. In terms of processing, sumoylated. Sumoylation increases its half-life, possibly by blocking ubiquitin-mediated degradation.

It localises to the nucleus. The protein resides in the chromosome. In terms of biological role, transcription factor that binds to the sequence motif 5'-CATCCCATAATA-3', and is specifically required to silence expression of fetal hemoglobin in adult erythroid cells. Prevents expression of fetal hemoglobin genes HBG1 and HBG2 through CHD4: acts as a direct transcriptional activator of CHD4, a central component of the NuRD complex that represses transcription of fetal hemoglobin genes HBG1 and HBG2 in erythroid cells. May also activate transcription of matrix-remodeling genes such as MMP1 during fibroblast senescence. May activate transcription of the gap junction gene GJC1, perhaps in response to increasing glucose. However, recent studies suggest that ZNF410 is dedicated to regulate expression of a single gene: CHD4. The chain is Zinc finger protein 410 from Mus musculus (Mouse).